The sequence spans 365 residues: S-adenosylmethionine:tRNA ribosyltransferase-isomerase (365 aa).

It belongs to the QueA family. In terms of assembly, monomer.

Its subcellular location is the cytoplasm. The catalysed reaction is 7-aminomethyl-7-carbaguanosine(34) in tRNA + S-adenosyl-L-methionine = epoxyqueuosine(34) in tRNA + adenine + L-methionine + 2 H(+). It functions in the pathway tRNA modification; tRNA-queuosine biosynthesis. Its function is as follows. Transfers and isomerizes the ribose moiety from AdoMet to the 7-aminomethyl group of 7-deazaguanine (preQ1-tRNA) to give epoxyqueuosine (oQ-tRNA). In Rickettsia peacockii (strain Rustic), this protein is S-adenosylmethionine:tRNA ribosyltransferase-isomerase.